The following is a 238-amino-acid chain: 1-(5-phosphoribosyl)-5-[(5-phosphoribosylamino)methylideneamino] imidazole-4-carboxamide isomerase (238 aa).

The active-site Proton acceptor is the D8. The Proton donor role is filled by D129.

This sequence belongs to the HisA/HisF family.

It localises to the cytoplasm. It carries out the reaction 1-(5-phospho-beta-D-ribosyl)-5-[(5-phospho-beta-D-ribosylamino)methylideneamino]imidazole-4-carboxamide = 5-[(5-phospho-1-deoxy-D-ribulos-1-ylimino)methylamino]-1-(5-phospho-beta-D-ribosyl)imidazole-4-carboxamide. The protein operates within amino-acid biosynthesis; L-histidine biosynthesis; L-histidine from 5-phospho-alpha-D-ribose 1-diphosphate: step 4/9. In Paracoccus denitrificans (strain Pd 1222), this protein is 1-(5-phosphoribosyl)-5-[(5-phosphoribosylamino)methylideneamino] imidazole-4-carboxamide isomerase.